Reading from the N-terminus, the 1036-residue chain is Isoleucine--tRNA ligase (1036 aa).

A 'HIGH' region motif is present at residues 46 to 56 (PFATGLPHYGH). The 'KMSKS' region motif lies at 589–593 (KMSKR). K592 lines the ATP pocket.

Belongs to the class-I aminoacyl-tRNA synthetase family. IleS type 2 subfamily. As to quaternary structure, monomer. Requires Zn(2+) as cofactor.

It localises to the cytoplasm. It carries out the reaction tRNA(Ile) + L-isoleucine + ATP = L-isoleucyl-tRNA(Ile) + AMP + diphosphate. Its function is as follows. Catalyzes the attachment of isoleucine to tRNA(Ile). As IleRS can inadvertently accommodate and process structurally similar amino acids such as valine, to avoid such errors it has two additional distinct tRNA(Ile)-dependent editing activities. One activity is designated as 'pretransfer' editing and involves the hydrolysis of activated Val-AMP. The other activity is designated 'posttransfer' editing and involves deacylation of mischarged Val-tRNA(Ile). The sequence is that of Isoleucine--tRNA ligase from Chlamydia muridarum (strain MoPn / Nigg).